The chain runs to 812 residues: Transcription-repair-coupling factor (812 aa).

The region spanning 280-441 is the Helicase ATP-binding domain; the sequence is DMSKPIPMDR…MTGIKDLSII (162 aa). Position 293 to 300 (293 to 300) interacts with ATP; sequence GDVGFGKT. Residues 394–397 carry the DEEH box motif; the sequence is DEEH. One can recognise a Helicase C-terminal domain in the interval 462–621; that stretch reads LIRKTILREI…NQDLEIRGVG (160 aa).

In the N-terminal section; belongs to the UvrB family. This sequence in the C-terminal section; belongs to the helicase family. RecG subfamily.

The protein resides in the cytoplasm. Its function is as follows. Couples transcription and DNA repair by recognizing RNA polymerase (RNAP) stalled at DNA lesions. Mediates ATP-dependent release of RNAP and its truncated transcript from the DNA, and recruitment of nucleotide excision repair machinery to the damaged site. This Buchnera aphidicola subsp. Acyrthosiphon pisum (strain APS) (Acyrthosiphon pisum symbiotic bacterium) protein is Transcription-repair-coupling factor (mfd).